The sequence spans 260 residues: Dehydrogenase/reductase SDR family member 4 (260 aa).

14–38 (IVTAATKGIGLAIAERLLDEGASVV) contacts NADP(+). Ser-148 lines the substrate pocket. Tyr-161 acts as the Proton acceptor in catalysis. Lys-165 provides a ligand contact to NADP(+).

It belongs to the short-chain dehydrogenases/reductases (SDR) family.

The enzyme catalyses a secondary alcohol + NADP(+) = a ketone + NADPH + H(+). Its function is as follows. Catalyzes the reduction of isatin, 4-oxonon-2-enal, 9,10-phenanthrenequinone, menadione, 2,3-hexaenadione, 3,4-hexanedione and 2,3-heptanedione. The chain is Dehydrogenase/reductase SDR family member 4 from Caenorhabditis elegans.